A 270-amino-acid chain; its full sequence is Phosphatidylglycerol--prolipoprotein diacylglyceryl transferase (270 aa).

Transmembrane regions (helical) follow at residues 19–39 (FPVYWYGIIIGTGVLLGLWLA), 56–76 (LVLIAVPIAILFARMYYVIFE), 92–112 (QGGLAIHGGLIGAVITGILFA), and 116–136 (GVSFWKLADIAAPSILLGQAI). Arg138 serves as a coordination point for a 1,2-diacyl-sn-glycero-3-phospho-(1'-sn-glycerol). Helical transmembrane passes span 178–198 (HPTFLYESLWNFAGVILLLAL), 206–226 (GELFFTYLIWYSIGRFFVEGL), and 236–256 (LRIAQVMSIGLVVISIIFIIV).

This sequence belongs to the Lgt family.

The protein localises to the cell membrane. The catalysed reaction is L-cysteinyl-[prolipoprotein] + a 1,2-diacyl-sn-glycero-3-phospho-(1'-sn-glycerol) = an S-1,2-diacyl-sn-glyceryl-L-cysteinyl-[prolipoprotein] + sn-glycerol 1-phosphate + H(+). The protein operates within protein modification; lipoprotein biosynthesis (diacylglyceryl transfer). In terms of biological role, catalyzes the transfer of the diacylglyceryl group from phosphatidylglycerol to the sulfhydryl group of the N-terminal cysteine of a prolipoprotein, the first step in the formation of mature lipoproteins. The protein is Phosphatidylglycerol--prolipoprotein diacylglyceryl transferase of Bacillus cereus (strain ZK / E33L).